Here is a 485-residue protein sequence, read N- to C-terminus: MISLTTLDLLLSINEGEMIEEIILTLLASPQLAIFFEKHPRLKRALLKDIPGWKHDLQQRIKEALIPVTLAEEFQLYQQILSANTNYFYLKLPDILETLNRIESPFSEEAQKLATNTIADSNTLQTLFIQRWRISLILQTTTFHKQLLEQEKEQLLAELQQKLTLSGNLDPVFSENDRAAGRLWDMSKSQLNHSQNDKQLLIHYSEFLHQQPELKKLAQLLGRSQSVKSKPQENHFFEPVTTIERTPDIIPEQVNGIGQSDDILRLLPIELAILGIEDLEYEFYRKLVEKKLLTYRLQGDNWREKTTLQPVTHYSQEEKPQGPFIICVDTSGSMGKFNEKCAKAFCLALLRIALADNRNCHIMLFTTGIVHYELSSPDGLEQATRFLSQTFKGGTDLAFCLTSTIEKMKEKCWKNADAVVISDFIAQRLPNSLIHQIKNLQLHQQYRFHAVSMSQYGKPDIMRIFDHIWHFDTGLKSRLLRKWRH.

It belongs to the ViaA family. In terms of assembly, homodimer. Interacts with RavA.

Its subcellular location is the cytoplasm. Its function is as follows. Component of the RavA-ViaA chaperone complex, which may act on the membrane to optimize the function of some of the respiratory chains. ViaA stimulates the ATPase activity of RavA. In Photorhabdus laumondii subsp. laumondii (strain DSM 15139 / CIP 105565 / TT01) (Photorhabdus luminescens subsp. laumondii), this protein is Regulatory protein ViaA.